Consider the following 452-residue polypeptide: Down-regulator of invasive growth 1 (452 aa).

Disordered regions lie at residues 1 to 145 (MAVS…SAPA) and 262 to 311 (RNKR…ADLR). Polar residues-rich tracts occupy residues 12–22 (EDTSIAKSTQD) and 35–53 (KGSSDSNIKNSPGGNSVGQ). Ser45 bears the Phosphoserine mark. Acidic residues predominate over residues 61–77 (PEEDDSGDKEADHEDSE). Residues 81 to 100 (AKKRKAQPLKNPKKSLKRGR) show a composition bias toward basic residues. Composition is skewed to polar residues over residues 107 to 116 (LSDSNTNTHG), 124 to 145 (LASSNSAHFPPVANQNVKSAPA), 269 to 281 (SYDSPLSGTASTG), and 291 to 307 (RNSSVGSSANAGPTQQR). 4 positions are modified to phosphoserine: Ser126, Ser142, Ser272, and Ser275. Residues 212–452 (IPPPHMLNKP…KSSSHHRTGK (241 aa)) are interaction with FUS3 and KSS1. Ser330 is subject to Phosphoserine. Low complexity predominate over residues 331 to 348 (ANTKARSASTSTSTSTST). The interval 331-395 (ANTKARSAST…QRTSQPQQQS (65 aa)) is disordered. Positions 349–361 (NRDRSSWHEAEPN) are enriched in basic and acidic residues. Residues 362–372 (KDEEEGTDLAI) are compositionally biased toward acidic residues. A compositionally biased stretch (low complexity) spans 378-395 (PTPTFTTFQRTSQPQQQS). Residue Thr379 is modified to Phosphothreonine. Phosphoserine occurs at positions 395 and 428.

In terms of assembly, forms a complex with DIG2, STE12 and either FUS3 or KSS1. The interaction of FUS3 with STE12 depends on the presence of both DIG1 and DIG2. STE12 is lost from FUS3/DIG1/DIG2 complex after pheromone treatment. DIG1 and DIG2 have also been reported to interact with CLN1 and CLN2. Phosphorylated by FUS3 and KSS1, in a pheromone-stimulated manner. Phosphorylation reduces the affinity for STE12.

The protein resides in the nucleus. In terms of biological role, DIG1 and DIG2 are negative regulators of the filamentation and pheromone induced mating program. DIG1 and DIG2 inhibit the transcriptional activity of STE12 by direct protein-protein interaction. DIG1 colocalizes to promoters with STE12 and redistributes with it during induction of filamentation (by butanol) or mating (by pheromone) to program specific genes, but binding of DIG1 to STE12 is reduced by pheromone treatment. This Saccharomyces cerevisiae (strain ATCC 204508 / S288c) (Baker's yeast) protein is Down-regulator of invasive growth 1 (DIG1).